Consider the following 244-residue polypeptide: 5-oxoprolinase subunit A (244 aa).

The protein belongs to the LamB/PxpA family. As to quaternary structure, forms a complex composed of PxpA, PxpB and PxpC.

The enzyme catalyses 5-oxo-L-proline + ATP + 2 H2O = L-glutamate + ADP + phosphate + H(+). Catalyzes the cleavage of 5-oxoproline to form L-glutamate coupled to the hydrolysis of ATP to ADP and inorganic phosphate. This Escherichia coli O157:H7 protein is 5-oxoprolinase subunit A.